A 355-amino-acid polypeptide reads, in one-letter code: Probable dual-specificity RNA methyltransferase RlmN (355 aa).

The Proton acceptor role is filled by E107. The region spanning T113 to E341 is the Radical SAM core domain. A disulfide bridge connects residues C120 and C346. Residues C127, C131, and C134 each contribute to the [4Fe-4S] cluster site. S-adenosyl-L-methionine is bound by residues G174–E175, S204, S227–H229, and N303. C346 (S-methylcysteine intermediate) is an active-site residue.

It belongs to the radical SAM superfamily. RlmN family. It depends on [4Fe-4S] cluster as a cofactor.

Its subcellular location is the cytoplasm. The catalysed reaction is adenosine(2503) in 23S rRNA + 2 reduced [2Fe-2S]-[ferredoxin] + 2 S-adenosyl-L-methionine = 2-methyladenosine(2503) in 23S rRNA + 5'-deoxyadenosine + L-methionine + 2 oxidized [2Fe-2S]-[ferredoxin] + S-adenosyl-L-homocysteine. The enzyme catalyses adenosine(37) in tRNA + 2 reduced [2Fe-2S]-[ferredoxin] + 2 S-adenosyl-L-methionine = 2-methyladenosine(37) in tRNA + 5'-deoxyadenosine + L-methionine + 2 oxidized [2Fe-2S]-[ferredoxin] + S-adenosyl-L-homocysteine. Specifically methylates position 2 of adenine 2503 in 23S rRNA and position 2 of adenine 37 in tRNAs. This Trichormus variabilis (strain ATCC 29413 / PCC 7937) (Anabaena variabilis) protein is Probable dual-specificity RNA methyltransferase RlmN.